Consider the following 420-residue polypeptide: RING finger protein 39 (420 aa).

The RING-type zinc-finger motif lies at cysteine 88–glycine 135. In terms of domain architecture, B30.2/SPRY spans aspartate 210–serine 420.

Expressed in testis.

The protein localises to the cytoplasm. It carries out the reaction S-ubiquitinyl-[E2 ubiquitin-conjugating enzyme]-L-cysteine + [acceptor protein]-L-lysine = [E2 ubiquitin-conjugating enzyme]-L-cysteine + N(6)-ubiquitinyl-[acceptor protein]-L-lysine.. Its pathway is protein modification; protein ubiquitination. Functionally, plays an inhibitory role in anti-RNA viral innate immunity by targeting the adapter DDX3X and promoting its 'Lys-48'-linked polyubiquitination. Alternatively, enhances the cGAS-STING pathway activation by promoting 'Lys-63'-linked ubiquitination of STING1, facilitating the STING1-TBK1 complex formation and STING1 activation. Its function is as follows. (Microbial infection) Plays a positive role in human immunodeficiency virus (HIV-1) replication. The sequence is that of RING finger protein 39 (RNF39) from Homo sapiens (Human).